A 175-amino-acid polypeptide reads, in one-letter code: uncharacterized protein (175 aa).

Disordered regions lie at residues 68-111 (NKSN…DDDQ) and 154-175 (PERAKRESDDEDDMFPIKKLTT). Residues 95 to 106 (EEQPMMPYQQPP) are compositionally biased toward low complexity.

This sequence belongs to the asfivirus H171R family.

The protein resides in the virion. This is an uncharacterized protein from African swine fever virus (isolate Pig/Kenya/KEN-50/1950) (ASFV).